A 184-amino-acid chain; its full sequence is ATP-dependent protease subunit HslV (184 aa).

Thr-11 is a catalytic residue. Na(+)-binding residues include Ala-165, Cys-168, and Thr-171.

Belongs to the peptidase T1B family. HslV subfamily. A double ring-shaped homohexamer of HslV is capped on each side by a ring-shaped HslU homohexamer. The assembly of the HslU/HslV complex is dependent on binding of ATP.

It is found in the cytoplasm. It carries out the reaction ATP-dependent cleavage of peptide bonds with broad specificity.. With respect to regulation, allosterically activated by HslU binding. Functionally, protease subunit of a proteasome-like degradation complex believed to be a general protein degrading machinery. In Zymomonas mobilis subsp. mobilis (strain ATCC 31821 / ZM4 / CP4), this protein is ATP-dependent protease subunit HslV.